Consider the following 589-residue polypeptide: O-fucosyltransferase 11 (589 aa).

Positions 1–37 (MKSKIHHQPNGSNNGVVSSNDNGCRSESPSPPLSPNR) are disordered. Over residues 10–23 (NGSNNGVVSSNDNG) the composition is skewed to low complexity. Residues 68 to 88 (MIYASGLLMCVGPFSGLVGWV) form a helical; Signal-anchor for type II membrane protein membrane-spanning segment. Asn-112, Asn-136, and Asn-239 each carry an N-linked (GlcNAc...) asparagine glycan. A substrate-binding site is contributed by 332–334 (HLR). N-linked (GlcNAc...) asparagine glycosylation is found at Asn-405, Asn-406, and Asn-564.

Belongs to the glycosyltransferase GT106 family.

Its subcellular location is the membrane. It participates in glycan metabolism. The sequence is that of O-fucosyltransferase 11 from Arabidopsis thaliana (Mouse-ear cress).